The primary structure comprises 256 residues: MSQTILSIKNLTASVDGNQILKGVNLEIKAGEVHAIMGRNGSGKSTLSKVITGHPDYEITGGEIIYQGQDLSALEPHERALAGIFLAFQYPLEIPGVSNLDFLRIAYNAKRKHLGLEELDTFDFEDLIQEKLDVVKMNPAFLERSLNEGFSGGEKKRNEILQMAILEPTLSILDEIDSGLDIDALRIVSEGVNFLKNPDNATLVITHYQRLLNYIIPDHIHVMYDGKIVMSGGKELALELEEKGYDFLDEQVLAPI.

The 245-residue stretch at 6–250 (LSIKNLTASV…EEKGYDFLDE (245 aa)) folds into the ABC transporter domain. 38–45 (GRNGSGKS) contributes to the ATP binding site.

Belongs to the ABC transporter superfamily. Ycf16 family.

The polypeptide is Probable ATP-dependent transporter slr0075 (Synechocystis sp. (strain ATCC 27184 / PCC 6803 / Kazusa)).